The sequence spans 150 residues: Large ribosomal subunit protein uL13 (150 aa).

This sequence belongs to the universal ribosomal protein uL13 family. In terms of assembly, part of the 50S ribosomal subunit.

This protein is one of the early assembly proteins of the 50S ribosomal subunit, although it is not seen to bind rRNA by itself. It is important during the early stages of 50S assembly. This is Large ribosomal subunit protein uL13 from Persephonella marina (strain DSM 14350 / EX-H1).